The sequence spans 274 residues: Eukaryotic translation initiation factor 3 subunit G-2 (274 aa).

One can recognise an RRM domain in the interval 194 to 272 (SAVRISNLSE…LILCVEWSKP (79 aa)).

It belongs to the eIF-3 subunit G family. In terms of assembly, component of the eukaryotic translation initiation factor 3 (eIF-3) complex. The eIF-3 complex interacts with pix.

It is found in the cytoplasm. RNA-binding component of the eukaryotic translation initiation factor 3 (eIF-3) complex, which is involved in protein synthesis of a specialized repertoire of mRNAs and, together with other initiation factors, stimulates binding of mRNA and methionyl-tRNAi to the 40S ribosome. The eIF-3 complex specifically targets and initiates translation of a subset of mRNAs involved in cell proliferation. This subunit can bind 18S rRNA. In Drosophila pseudoobscura pseudoobscura (Fruit fly), this protein is Eukaryotic translation initiation factor 3 subunit G-2.